Here is a 787-residue protein sequence, read N- to C-terminus: Serine proteinase stubble (787 aa).

The disordered stretch occupies residues 1-22 (MKQPTLIRPRLRHRRSTPAAAT). Residues 1 to 58 (MKQPTLIRPRLRHRRSTPAAATKMCPKRHWLVNNRAAGSRGSGGAAARSRRSLDQIVE) lie on the Cytoplasmic side of the membrane. Residues 59–80 (VLVALIVVNCLATAAAALITPP) traverse the membrane as a helical; Signal-anchor for type II membrane protein segment. Residues 81–787 (DSLESLGSLG…FTPWILEHVR (707 aa)) lie on the Extracellular side of the membrane. The N-linked (GlcNAc...) asparagine glycan is linked to Asn177. Residues 225 to 516 (AGTLVIRPSG…EISDSSIPDA (292 aa)) form a disordered region. Low complexity-rich tracts occupy residues 262 to 280 (SASH…NPNS), 287 to 303 (QQQQ…NHWQ), 358 to 368 (PSTSTSTTSTS), 393 to 438 (SLAA…RTTT), and 449 to 485 (TTAT…VTSS). A compositionally biased stretch (polar residues) spans 502–512 (GIETNEISDSS). Cystine bridges form between Cys532–Cys660 and Cys575–Cys591. In terms of domain architecture, Peptidase S1 spans 544–787 (IVGGKSAAFG…FTPWILEHVR (244 aa)). Residues His590 and Asp640 each act as charge relay system in the active site. Asn672 carries N-linked (GlcNAc...) asparagine glycosylation. 2 cysteine pairs are disulfide-bonded: Cys704-Cys723 and Cys734-Cys763. Residue Ser738 is the Charge relay system of the active site.

It belongs to the peptidase S1 family. In terms of processing, may activate itself by proteolytic cleavage.

Its subcellular location is the membrane. In terms of biological role, hormone dependent protease required for epithelial morphogenesis, including the formation of bristles, legs, and wings. Has a dual function, detaches imaginal disk cells from extracellular matrices through its extracellular proteolytic domain and transmits an outside-to-inside signal to its intracellular domain to modify the cytoskeleton during morphogenesis. This Drosophila melanogaster (Fruit fly) protein is Serine proteinase stubble (Sb).